Reading from the N-terminus, the 168-residue chain is Phosphopantetheine adenylyltransferase (168 aa).

Substrate is bound at residue threonine 14. ATP-binding positions include 14–15 and histidine 22; that span reads TF. Substrate contacts are provided by lysine 46, leucine 78, and arginine 92. ATP-binding positions include 93 to 95, glutamate 103, and 128 to 134; these read GLR and YSFISSS.

The protein belongs to the bacterial CoaD family. Homohexamer. Mg(2+) serves as cofactor.

The protein localises to the cytoplasm. It catalyses the reaction (R)-4'-phosphopantetheine + ATP + H(+) = 3'-dephospho-CoA + diphosphate. It participates in cofactor biosynthesis; coenzyme A biosynthesis; CoA from (R)-pantothenate: step 4/5. Its function is as follows. Reversibly transfers an adenylyl group from ATP to 4'-phosphopantetheine, yielding dephospho-CoA (dPCoA) and pyrophosphate. This Xanthomonas euvesicatoria pv. vesicatoria (strain 85-10) (Xanthomonas campestris pv. vesicatoria) protein is Phosphopantetheine adenylyltransferase.